We begin with the raw amino-acid sequence, 121 residues long: Small ribosomal subunit protein uS13 (121 aa).

Residues 93 to 121 (RGLPMRGQRTRTNARTRKGPRKAAQSLKK) form a disordered region.

It belongs to the universal ribosomal protein uS13 family. In terms of assembly, part of the 30S ribosomal subunit. Forms a loose heterodimer with protein S19. Forms two bridges to the 50S subunit in the 70S ribosome.

Functionally, located at the top of the head of the 30S subunit, it contacts several helices of the 16S rRNA. In the 70S ribosome it contacts the 23S rRNA (bridge B1a) and protein L5 of the 50S subunit (bridge B1b), connecting the 2 subunits; these bridges are implicated in subunit movement. Contacts the tRNAs in the A and P-sites. In Variovorax paradoxus (strain S110), this protein is Small ribosomal subunit protein uS13.